The chain runs to 324 residues: Sperm acrosome membrane-associated protein 6 (324 aa).

The first 26 residues, 1-26, serve as a signal peptide directing secretion; that stretch reads MALLALASAVPSALLALAVFRVPAWA. A CXXC motif motif is present at residues 27–30; sequence CLLC. Intrachain disulfides connect C27/C139, C30/C142, C41/C55, C124/C147, C128/C153, and C170/C226. Over 27 to 295 the chain is Extracellular; the sequence is CLLCFTTYSE…RPEALTPSNL (269 aa). The CXXC motif motif lies at 139–142; it reads CSGC. Positions 150–236 constitute an Ig-like domain; it reads PLDCPVQDVT…VIKQDQRPLA (87 aa). N-linked (GlcNAc...) asparagine glycosylation occurs at N243. Residues 296 to 316 form a helical membrane-spanning segment; that stretch reads FLLAVLGALASASATVLAWMF. Residues 317-324 are Cytoplasmic-facing; the sequence is FRWYCSGN.

It belongs to the SPACA6 family. In terms of assembly, forms a complex with IZUMO1 and TMEM81 on spermatocyte cell membrane required for fertilization. Detected at the sperm head, equatorial region, neck and midpiece (at protein level). Expressed in testis.

The protein localises to the cytoplasmic vesicle. It is found in the secretory vesicle. The protein resides in the acrosome membrane. Sperm protein required for fusion of sperm with the egg membrane during fertilization. May regulate the expression of sperm surface protein DCST2. The chain is Sperm acrosome membrane-associated protein 6 from Homo sapiens (Human).